A 111-amino-acid chain; its full sequence is Parvalbumin alpha (111 aa).

The residue at position 1 (Thr1) is an N-acetylthreonine; in form C2. EF-hand domains are found at residues 40–75 (KPDDTLKEVFGILDQDKSGYIEEEELKFVLKGFAAG) and 79–111 (LTANETKALLKAGDQDGDDKIGVDEFTNLVKAA). Residues Asp53, Asp55, Ser57, Tyr59, Glu61, Glu64, Asp92, Asp94, Asp96, Lys98, and Glu103 each coordinate Ca(2+).

This sequence belongs to the parvalbumin family. Acetylation of Thr-1 converts C1 to C2.

Functionally, in muscle, parvalbumin is thought to be involved in relaxation after contraction. It binds two calcium ions. This is Parvalbumin alpha from Latimeria chalumnae (Coelacanth).